Reading from the N-terminus, the 203-residue chain is ATP-dependent Clp protease proteolytic subunit (203 aa).

The active-site Nucleophile is Ser-101. The active site involves His-126.

This sequence belongs to the peptidase S14 family. As to quaternary structure, component of the chloroplastic Clp protease core complex.

It localises to the plastid. Its subcellular location is the chloroplast stroma. The enzyme catalyses Hydrolysis of proteins to small peptides in the presence of ATP and magnesium. alpha-casein is the usual test substrate. In the absence of ATP, only oligopeptides shorter than five residues are hydrolyzed (such as succinyl-Leu-Tyr-|-NHMec, and Leu-Tyr-Leu-|-Tyr-Trp, in which cleavage of the -Tyr-|-Leu- and -Tyr-|-Trp bonds also occurs).. Its function is as follows. Cleaves peptides in various proteins in a process that requires ATP hydrolysis. Has a chymotrypsin-like activity. Plays a major role in the degradation of misfolded proteins. The protein is ATP-dependent Clp protease proteolytic subunit of Marchantia polymorpha (Common liverwort).